Here is a 290-residue protein sequence, read N- to C-terminus: Undecaprenyl-diphosphatase (290 aa).

8 consecutive transmembrane segments (helical) span residues Met-1–Phe-21, Ser-48–Phe-68, Ile-101–Ile-121, Leu-125–Ala-145, Ile-161–Phe-181, Ser-202–Leu-222, Ala-231–Ile-251, and Phe-266–Ile-286.

It belongs to the UppP family.

The protein resides in the cell membrane. It catalyses the reaction di-trans,octa-cis-undecaprenyl diphosphate + H2O = di-trans,octa-cis-undecaprenyl phosphate + phosphate + H(+). In terms of biological role, catalyzes the dephosphorylation of undecaprenyl diphosphate (UPP). Confers resistance to bacitracin. In Staphylococcus epidermidis (strain ATCC 35984 / DSM 28319 / BCRC 17069 / CCUG 31568 / BM 3577 / RP62A), this protein is Undecaprenyl-diphosphatase.